The chain runs to 113 residues: Large ribosomal subunit protein eL36z (113 aa).

The segment covering 78 to 88 (RKLGTHKRAKR) has biased composition (basic residues). The interval 78–113 (RKLGTHKRAKRKREEMSSVLRKMRSLGGAAAAEKKM) is disordered.

The protein belongs to the eukaryotic ribosomal protein eL36 family.

The chain is Large ribosomal subunit protein eL36z (RPL36A) from Arabidopsis thaliana (Mouse-ear cress).